A 293-amino-acid polypeptide reads, in one-letter code: 4-diphosphocytidyl-2-C-methyl-D-erythritol kinase (293 aa).

The active site involves Lys-16. 99 to 109 is a binding site for ATP; it reads PMGAGLGGGSS. Residue Asp-141 is part of the active site.

Belongs to the GHMP kinase family. IspE subfamily.

It catalyses the reaction 4-CDP-2-C-methyl-D-erythritol + ATP = 4-CDP-2-C-methyl-D-erythritol 2-phosphate + ADP + H(+). The protein operates within isoprenoid biosynthesis; isopentenyl diphosphate biosynthesis via DXP pathway; isopentenyl diphosphate from 1-deoxy-D-xylulose 5-phosphate: step 3/6. Its function is as follows. Catalyzes the phosphorylation of the position 2 hydroxy group of 4-diphosphocytidyl-2C-methyl-D-erythritol. This Burkholderia cenocepacia (strain ATCC BAA-245 / DSM 16553 / LMG 16656 / NCTC 13227 / J2315 / CF5610) (Burkholderia cepacia (strain J2315)) protein is 4-diphosphocytidyl-2-C-methyl-D-erythritol kinase.